The sequence spans 33 residues: Cytochrome c oxidase subunit 5B liver, mitochondrial (33 aa).

It belongs to the cytochrome c oxidase subunit 5B family. As to quaternary structure, component of the cytochrome c oxidase (complex IV, CIV), a multisubunit enzyme composed of 14 subunits. The complex is composed of a catalytic core of 3 subunits MT-CO1, MT-CO2 and MT-CO3, encoded in the mitochondrial DNA, and 11 supernumerary subunits COX4I, COX5A, COX5B, COX6A, COX6B, COX6C, COX7A, COX7B, COX7C, COX8 and NDUFA4, which are encoded in the nuclear genome. The complex exists as a monomer or a dimer and forms supercomplexes (SCs) in the inner mitochondrial membrane with NADH-ubiquinone oxidoreductase (complex I, CI) and ubiquinol-cytochrome c oxidoreductase (cytochrome b-c1 complex, complex III, CIII), resulting in different assemblies (supercomplex SCI(1)III(2)IV(1) and megacomplex MCI(2)III(2)IV(2)).

It localises to the mitochondrion inner membrane. The protein operates within energy metabolism; oxidative phosphorylation. Functionally, component of the cytochrome c oxidase, the last enzyme in the mitochondrial electron transport chain which drives oxidative phosphorylation. The respiratory chain contains 3 multisubunit complexes succinate dehydrogenase (complex II, CII), ubiquinol-cytochrome c oxidoreductase (cytochrome b-c1 complex, complex III, CIII) and cytochrome c oxidase (complex IV, CIV), that cooperate to transfer electrons derived from NADH and succinate to molecular oxygen, creating an electrochemical gradient over the inner membrane that drives transmembrane transport and the ATP synthase. Cytochrome c oxidase is the component of the respiratory chain that catalyzes the reduction of oxygen to water. Electrons originating from reduced cytochrome c in the intermembrane space (IMS) are transferred via the dinuclear copper A center (CU(A)) of subunit 2 and heme A of subunit 1 to the active site in subunit 1, a binuclear center (BNC) formed by heme A3 and copper B (CU(B)). The BNC reduces molecular oxygen to 2 water molecules using 4 electrons from cytochrome c in the IMS and 4 protons from the mitochondrial matrix. The polypeptide is Cytochrome c oxidase subunit 5B liver, mitochondrial (Oncorhynchus mykiss (Rainbow trout)).